Here is a 130-residue protein sequence, read N- to C-terminus: Small ribosomal subunit protein uS8 (130 aa).

The protein belongs to the universal ribosomal protein uS8 family.

The protein resides in the cytoplasm. In Brassica napus (Rape), this protein is Small ribosomal subunit protein uS8 (RPS15A).